Consider the following 141-residue polypeptide: MPRHSRGKSSSSASGASQRQLRVGELIRHAMADILAQGGVHDDTLAGHIITVPEVRMSPDLKLATVYVMPLGGHDTEAVLAALAHNKKFLRGEVAHRVNLKFAPELRFRVDERFDEAERIEKLLRTPAVQRDLNSDSDDNA.

The protein belongs to the RbfA family. As to quaternary structure, monomer. Binds 30S ribosomal subunits, but not 50S ribosomal subunits or 70S ribosomes.

It localises to the cytoplasm. One of several proteins that assist in the late maturation steps of the functional core of the 30S ribosomal subunit. Associates with free 30S ribosomal subunits (but not with 30S subunits that are part of 70S ribosomes or polysomes). Required for efficient processing of 16S rRNA. May interact with the 5'-terminal helix region of 16S rRNA. The protein is Ribosome-binding factor A of Afipia carboxidovorans (strain ATCC 49405 / DSM 1227 / KCTC 32145 / OM5) (Oligotropha carboxidovorans).